Here is a 261-residue protein sequence, read N- to C-terminus: Gap junction beta-6 protein (261 aa).

Residues 1–22 (MDWGTLHTFIGGVNKHSTSIGK) lie on the Cytoplasmic side of the membrane. The helical transmembrane segment at 23 to 45 (VWITVIFIFRVMILVVAAQEVWG) threads the bilayer. At 46–75 (DEQEDFVCNTLQPGCKNVCYDHFFPVSHIR) the chain is on the extracellular side. The helical transmembrane segment at 76–98 (LWALQLIFVSTPALLVAMHVAYY) threads the bilayer. Over 99–131 (RHETTRKFRRGEKRNDFKDIEDIKKQKVRIEGS) the chain is Cytoplasmic. A helical membrane pass occupies residues 132 to 154 (LWWTYTSSIFFRIIFEAAFMYVF). Topologically, residues 155 to 192 (YFLYNGYHLPWVLKCGIDPCPNLVDCFISRPTEKTVFT) are extracellular. Residues 193 to 215 (IFMISASVICMLLNVAELCYLLL) form a helical membrane-spanning segment. The Cytoplasmic segment spans residues 216-261 (KVCFRRSKRAQTQKNHPNHALKESKQNEMNELISDSGQNAITGFPS).

This sequence belongs to the connexin family. Beta-type (group I) subfamily. A connexon is composed of a hexamer of connexins. Interacts with CNST.

Its subcellular location is the cell membrane. The protein localises to the cell junction. It localises to the gap junction. One gap junction consists of a cluster of closely packed pairs of transmembrane channels, the connexons, through which materials of low MW diffuse from one cell to a neighboring cell. The sequence is that of Gap junction beta-6 protein (GJB6) from Homo sapiens (Human).